A 1019-amino-acid chain; its full sequence is DNA topoisomerase 1 (1019 aa).

The interval 1-160 (MNSIQVKNEP…KTMSITGSGE (160 aa)) is disordered. A compositionally biased stretch (basic and acidic residues) spans 46-56 (KPLAKRPKVED). Positions 62–78 (PLTSTVSSQNGVQKRSG) are enriched in polar residues. Composition is skewed to acidic residues over residues 83–93 (DDNDDDSDSDS) and 107–136 (SDDD…DDDD). Interaction with DNA regions lie at residues 379–380 (KY), 442–447 (RAGNEK), and 556–558 (SAK). The region spanning 386 to 860 (TSNFKTNSDR…KKVKKEEEEN (475 aa)) is the Topo IB-type catalytic domain. Positions 716-737 (EQKGLTGDDGTPKKGKKAKNVE) are disordered. Catalysis depends on tyrosine 822, which acts as the O-(3'-phospho-DNA)-tyrosine intermediate. Disordered regions lie at residues 843–890 (GQGK…TGDS) and 940–1019 (MRKL…AAVV). Positions 854 to 863 (KKEEEENDIK) are enriched in basic and acidic residues. Basic residues predominate over residues 864-879 (PKKKDAKGAASKKRAA). Composition is skewed to basic and acidic residues over residues 940–950 (MRKLDSAERKG) and 980–996 (TSAD…VDKT). Residues 997–1012 (EESDDDLSSDSSDDED) are compositionally biased toward acidic residues.

Belongs to the type IB topoisomerase family. As to quaternary structure, monomer.

The catalysed reaction is ATP-independent breakage of single-stranded DNA, followed by passage and rejoining.. Releases the supercoiling and torsional tension of DNA introduced during the DNA replication and transcription by transiently cleaving and rejoining one strand of the DNA duplex. Introduces a single-strand break via transesterification at a target site in duplex DNA. The scissile phosphodiester is attacked by the catalytic tyrosine of the enzyme, resulting in the formation of a DNA-(3'-phosphotyrosyl)-enzyme intermediate and the expulsion of a 5'-OH DNA strand. The free DNA strand then rotates around the intact phosphodiester bond on the opposing strand, thus removing DNA supercoils. Finally, in the religation step, the DNA 5'-OH attacks the covalent intermediate to expel the active-site tyrosine and restore the DNA phosphodiester backbone. In Mycosarcoma maydis (Corn smut fungus), this protein is DNA topoisomerase 1 (TOP1).